The following is a 344-amino-acid chain: Heat-inducible transcription repressor HrcA (344 aa).

Belongs to the HrcA family.

Its function is as follows. Negative regulator of class I heat shock genes (grpE-dnaK-dnaJ and groELS operons). Prevents heat-shock induction of these operons. This chain is Heat-inducible transcription repressor HrcA, found in Moorella thermoacetica (strain ATCC 39073 / JCM 9320).